Consider the following 389-residue polypeptide: MALSRLSSRSNIITRPFSAAFSRLISTDTTPITIETSLPFTAHLCDPPSRSVESSSQELLDFFRTMALMRRMEIAADSLYKAKLIRGFCHLYDGQEAVAIGMEAAITKKDAIITAYRDHCIFLGRGGSLHEVFSELMGRQAGCSKGKGGSMHFYKKESSFYGGHGIVGAQVPLGCGIAFAQKYNKEEAVTFALYGDGAANQGQLFEALNISALWDLPAILVCENNHYGMGTAEWRAAKSPSYYKRGDYVPGLKVDGMDAFAVKQACKFAKQHALEKGPIILEMDTYRYHGHSMSDPGSTYRTRDEISGVRQERDPIERIKKLVLSHDLATEKELKDMEKEIRKEVDDAIAKAKDCPMPEPSELFTNVYVKGFGTESFGPDRKEVKASLP.

A mitochondrion-targeting transit peptide spans 1–32; it reads MALSRLSSRSNIITRPFSAAFSRLISTDTTPI. The pyruvate site is built by His90, Tyr116, Arg117, Gly165, Val167, Asp196, Gly197, Ala198, Asn225, and Tyr227. 8 residues coordinate thiamine diphosphate: Tyr116, Arg117, Gly165, Val167, Asp196, Gly197, Ala198, and Asn225. Asp196 provides a ligand contact to Mg(2+). Asn225 and Tyr227 together coordinate Mg(2+). His291 lines the thiamine diphosphate pocket.

As to quaternary structure, tetramer of 2 alpha and 2 beta subunits. It depends on thiamine diphosphate as a cofactor. Requires Mg(2+) as cofactor. As to expression, expressed in roots, rosettes and flowers.

The protein localises to the mitochondrion matrix. The enzyme catalyses N(6)-[(R)-lipoyl]-L-lysyl-[protein] + pyruvate + H(+) = N(6)-[(R)-S(8)-acetyldihydrolipoyl]-L-lysyl-[protein] + CO2. With respect to regulation, E1 activity is regulated by phosphorylation (inactivation) and dephosphorylation (activation) of the alpha subunit. Its function is as follows. The pyruvate dehydrogenase complex catalyzes the overall conversion of pyruvate to acetyl-CoA and CO(2). It contains multiple copies of three enzymatic components: pyruvate dehydrogenase (E1), dihydrolipoamide acetyltransferase (E2) and lipoamide dehydrogenase (E3). This Arabidopsis thaliana (Mouse-ear cress) protein is Pyruvate dehydrogenase E1 component subunit alpha-1, mitochondrial (E1 ALPHA).